Here is a 250-residue protein sequence, read N- to C-terminus: 5-oxoprolinase subunit A (250 aa).

The protein belongs to the LamB/PxpA family. In terms of assembly, forms a complex composed of PxpA, PxpB and PxpC.

The catalysed reaction is 5-oxo-L-proline + ATP + 2 H2O = L-glutamate + ADP + phosphate + H(+). In terms of biological role, catalyzes the cleavage of 5-oxoproline to form L-glutamate coupled to the hydrolysis of ATP to ADP and inorganic phosphate. This chain is 5-oxoprolinase subunit A, found in Staphylococcus aureus (strain MW2).